We begin with the raw amino-acid sequence, 869 residues long: Probable beta-glucosidase F (869 aa).

The first 19 residues, 1 to 19, serve as a signal peptide directing secretion; that stretch reads MRVLSAIALVASLVPSALS. Residues asparagine 69, asparagine 77, and asparagine 261 are each glycosylated (N-linked (GlcNAc...) asparagine). Residue aspartate 289 is part of the active site. N-linked (GlcNAc...) asparagine glycosylation is found at asparagine 332, asparagine 364, asparagine 399, asparagine 425, and asparagine 478. The interval 678–698 is disordered; the sequence is AYPPTRPPKGPTPTYPTTIPN. A compositionally biased stretch (pro residues) spans 681–691; that stretch reads PTRPPKGPTPT. N-linked (GlcNAc...) asparagine glycosylation occurs at asparagine 728.

This sequence belongs to the glycosyl hydrolase 3 family.

It localises to the secreted. It catalyses the reaction Hydrolysis of terminal, non-reducing beta-D-glucosyl residues with release of beta-D-glucose.. It functions in the pathway glycan metabolism; cellulose degradation. Functionally, beta-glucosidases are one of a number of cellulolytic enzymes involved in the degradation of cellulosic biomass. Catalyzes the last step releasing glucose from the inhibitory cellobiose. In Neosartorya fischeri (strain ATCC 1020 / DSM 3700 / CBS 544.65 / FGSC A1164 / JCM 1740 / NRRL 181 / WB 181) (Aspergillus fischerianus), this protein is Probable beta-glucosidase F (bglF).